A 703-amino-acid polypeptide reads, in one-letter code: Probable boron transporter 2 (703 aa).

Residues 1–35 (MEETFVPFEGIKNDLKGRLMCYKQDWTGGIKAGFR) lie on the Cytoplasmic side of the membrane. Residues 36 to 56 (ILAPTTYIFFASAIPVISFGE) traverse the membrane as a helical segment. Topologically, residues 57–75 (QLERSTDGVLTAVQTLAST) are extracellular. A helical membrane pass occupies residues 76 to 96 (AICGIIHSIIGGQPLLILGVA). The Cytoplasmic portion of the chain corresponds to 97-120 (EPTVIMYTFMFNFAKGRPELGRNL). Residues 121-141 (FLAWSGWVCVWTSLILFVLAI) traverse the membrane as a helical segment. At 142–155 (CGACSFINRFTRVA) the chain is on the extracellular side. Residues 156–176 (GELFGLLIAMLFMQQAIKGLV) form a helical membrane-spanning segment. At 177–195 (DEFRAPAREDLKLVEFLPS) the chain is on the cytoplasmic side. Residues 196-216 (WRFANGMFALVLSFGLLITAL) traverse the membrane as a helical segment. Topologically, residues 217-233 (RSRKARSWRYGTGWLRS) are extracellular. The chain crosses the membrane as a helical span at residues 234–254 (LVADYGVPLMVLVWTGVSYIP). Residues 255-289 (TGDVPKGIPRRLFSPNPWSPGAYENWTVVKEMLQV) are Cytoplasmic-facing. A helical transmembrane segment spans residues 290–310 (PIVYIIGAFIPATMIAVLYYF). Residues 311–337 (DHSVASQLAQQKEFNLRKPSSYHYDLL) lie on the Extracellular side of the membrane. The chain crosses the membrane as a helical span at residues 338–358 (LLGFLTLMCGLLGIPPSNGVI). Over 359 to 480 (PQSPMHTKSL…AVMVGGCVAA (122 aa)) the chain is Cytoplasmic. A helical membrane pass occupies residues 481–501 (MPLLKMIPTSVLWGYFAFMAI). At 502–557 (ESLPGNQFWERILLLFTAPSRRFKVLEDNHATFVETVPFKTIAMFTIFQTTYLLTC) the chain is on the extracellular side. Residues 558 to 578 (FGLTWIPIAGVMFPLLIMFLI) traverse the membrane as a helical segment. Residues 579-703 (PVRQYILPRF…SPLNPSSSSK (125 aa)) lie on the Cytoplasmic side of the membrane. The tract at residues 678 to 703 (EMSPRLSGKGQNSPKPSPLNPSSSSK) is disordered.

This sequence belongs to the anion exchanger (TC 2.A.31.3) family.

The protein localises to the membrane. In terms of biological role, probable boron transporter. Boron is essential for maintaining the integrity of plants cell walls. The polypeptide is Probable boron transporter 2 (BOR2) (Arabidopsis thaliana (Mouse-ear cress)).